We begin with the raw amino-acid sequence, 418 residues long: 3-isopropylmalate dehydratase large subunit 1 (418 aa).

[4Fe-4S] cluster is bound by residues Cys298, Cys358, and Cys361.

This sequence belongs to the aconitase/IPM isomerase family. LeuC type 2 subfamily. In terms of assembly, heterodimer of LeuC and LeuD. [4Fe-4S] cluster serves as cofactor.

The catalysed reaction is (2R,3S)-3-isopropylmalate = (2S)-2-isopropylmalate. The protein operates within amino-acid biosynthesis; L-leucine biosynthesis; L-leucine from 3-methyl-2-oxobutanoate: step 2/4. In terms of biological role, catalyzes the isomerization between 2-isopropylmalate and 3-isopropylmalate, via the formation of 2-isopropylmaleate. This Archaeoglobus fulgidus (strain ATCC 49558 / DSM 4304 / JCM 9628 / NBRC 100126 / VC-16) protein is 3-isopropylmalate dehydratase large subunit 1.